The following is a 179-amino-acid chain: Inner membrane-spanning protein YciB (179 aa).

5 helical membrane-spanning segments follow: residues Ile22–Ile42, Met50–Asn70, Trp76–Met96, Ile121–Met141, and Phe149–Ile169.

The protein belongs to the YciB family.

The protein localises to the cell inner membrane. Functionally, plays a role in cell envelope biogenesis, maintenance of cell envelope integrity and membrane homeostasis. The polypeptide is Inner membrane-spanning protein YciB (Enterobacter sp. (strain 638)).